The chain runs to 235 residues: Thaumatin I (235 aa).

An N-terminal signal peptide occupies residues 1–22 (MAATTCFFFLFPFLLLLTLSRA). 8 cysteine pairs are disulfide-bonded: Cys31–Cys226, Cys78–Cys88, Cys93–Cys99, Cys143–Cys215, Cys148–Cys199, Cys156–Cys167, Cys171–Cys180, and Cys181–Cys186. Positions 230–235 (LELEDE) are cleaved as a propeptide — removed in mature form.

This sequence belongs to the thaumatin family.

The protein resides in the cytoplasmic vesicle. Its function is as follows. Taste-modifying protein; intensely sweet-tasting. It is 100000 times sweeter than sucrose on a molar basis. The chain is Thaumatin I from Thaumatococcus daniellii (Katemfe).